The chain runs to 232 residues: Orotate phosphoribosyltransferase (232 aa).

5-phospho-alpha-D-ribose 1-diphosphate-binding positions include R107, K108, K111, H113, and 133–141 (EDLTTAGGS). T137 is a binding site for orotate.

The protein belongs to the purine/pyrimidine phosphoribosyltransferase family. PyrE subfamily. In terms of assembly, homodimer. Requires Mg(2+) as cofactor.

The enzyme catalyses orotidine 5'-phosphate + diphosphate = orotate + 5-phospho-alpha-D-ribose 1-diphosphate. It functions in the pathway pyrimidine metabolism; UMP biosynthesis via de novo pathway; UMP from orotate: step 1/2. Functionally, catalyzes the transfer of a ribosyl phosphate group from 5-phosphoribose 1-diphosphate to orotate, leading to the formation of orotidine monophosphate (OMP). This Agrobacterium fabrum (strain C58 / ATCC 33970) (Agrobacterium tumefaciens (strain C58)) protein is Orotate phosphoribosyltransferase.